The primary structure comprises 331 residues: N-arachidonyl glycine receptor (331 aa).

Topologically, residues 1–26 (MITLNNQDQPVPFNNSYPDEYEIAAL) are extracellular. An N-linked (GlcNAc...) asparagine glycan is attached at asparagine 14. Residues 27–47 (VFYSCIFIIGLFVNITALWVF) traverse the membrane as a helical segment. Residues 48–56 (SCTTKKRTT) lie on the Cytoplasmic side of the membrane. Residues 57 to 77 (VTIYMMNVALVDLIFIMTLPF) traverse the membrane as a helical segment. Topologically, residues 78–95 (RMFYYAKDEWPFGEYFCQ) are extracellular. An intrachain disulfide couples cysteine 94 to cysteine 172. Residues 96-116 (ILGALTVFYPSIALWLLAFIS) form a helical membrane-spanning segment. At 117–138 (ADRYMAIVQPKYAKELKNTCKA) the chain is on the cytoplasmic side. A helical membrane pass occupies residues 139-159 (VLACVGVWIMTLTTTIPLLLL). Topologically, residues 160 to 191 (HKDPDKDSTPATCLKISDIVYLKAVNVLNFTR) are extracellular. A glycan (N-linked (GlcNAc...) asparagine) is linked at asparagine 188. Residues 192–212 (LTFFFLIPLFIMIGCYLVIIH) traverse the membrane as a helical segment. The Cytoplasmic segment spans residues 213–232 (NLLHGRTSKLKPKVKEKSIR). The helical transmembrane segment at 233 to 253 (IIITLLVQVLVCFMPFHICFA) threads the bilayer. Topologically, residues 254–268 (FLMLGTGENSYSPWG) are extracellular. Residues 269–289 (AFTTFLMNLSTCLDVILYYIV) form a helical membrane-spanning segment. Residues 290–331 (SKQFQARVISVMLYRNYLRGMRRKSFRSGSLRSLSNINSEML) are Cytoplasmic-facing. Position 322 is a phosphoserine (serine 322).

Belongs to the G-protein coupled receptor 1 family.

The protein resides in the cell membrane. Its subcellular location is the cytoplasmic vesicle membrane. G protein-coupled receptor (GPCR) that plays a role in diverse physiological processes particularly within the immune and nervous systems. Becomes active when triggered by various endogenous ligands including endocannabinoid N-arachidonyl glycine (NAGly), delta-9-tetrahydrocannabinol or resolvin D2/RvD2 derived from the omega-3 fatty acid docosahexaenoic acid (DHA). Upon RvD2 binding, facilitates the resolution of inflammation, aiding in tissue repair and homeostasis. Mechanistically, RvD2 ligation initiates Galphas protein coupling, activation of cAMP-PKA signaling pathway and phosphorylation of STAT3, leading to RvD2-stimulated macrophage phagocytosis. Mediates NAGly-induced process of reorganization of actin filaments and induction of acrosomal exocytosis. Activation by N-arachidonoyl glycine (NAGly) can also induce apoptosis in macrophages. Plays a role in homeostasis of CD8+ subsets of intraepithelial lymphocytes (IELs) (CD8alphaalpha and CD8alphabeta IELs) in small intestine by supporting preferential migration of CD8alphaalpha T-cells to intraepithelial compartment over lamina propria compartment, and by mediating their reconstitution into small intestine after bone marrow transplant. Participates also in hypotensive responses, mediating reduction in intraocular and blood pressure. This Macaca fascicularis (Crab-eating macaque) protein is N-arachidonyl glycine receptor.